A 519-amino-acid chain; its full sequence is Ion-translocating oxidoreductase complex subunit C (519 aa).

2 4Fe-4S ferredoxin-type domains span residues 372–401 (ETPEAKTMPCIRCGRCVQGCPVGLTPFELN) and 411–440 (GAAKVGLMDCLACGCCSYNCPANLPLVQSF). Positions 381, 384, 387, 391, 420, 423, 426, and 430 each coordinate [4Fe-4S] cluster. The tract at residues 494–519 (KAEEAAAAAAMPPPATATAIQGEATP) is disordered.

It belongs to the 4Fe4S bacterial-type ferredoxin family. RnfC subfamily. In terms of assembly, the complex is composed of six subunits: RnfA, RnfB, RnfC, RnfD, RnfE and RnfG. The cofactor is [4Fe-4S] cluster.

The protein resides in the cellular chromatophore membrane. Functionally, part of a membrane-bound complex that couples electron transfer with translocation of ions across the membrane. Required for nitrogen fixation. Involved in electron transfer to nitrogenase. The chain is Ion-translocating oxidoreductase complex subunit C from Rhodobacter capsulatus (Rhodopseudomonas capsulata).